The primary structure comprises 207 residues: Outer-membrane lipoprotein LolB (207 aa).

Residues 1–21 (MTLPDFRLIRLLPLASLVLTA) form the signal peptide. Residue Cys-22 is the site of N-palmitoyl cysteine attachment. The S-diacylglycerol cysteine moiety is linked to residue Cys-22.

Belongs to the LolB family. As to quaternary structure, monomer.

The protein localises to the cell outer membrane. In terms of biological role, plays a critical role in the incorporation of lipoproteins in the outer membrane after they are released by the LolA protein. In Salmonella arizonae (strain ATCC BAA-731 / CDC346-86 / RSK2980), this protein is Outer-membrane lipoprotein LolB.